Here is a 125-residue protein sequence, read N- to C-terminus: Small ribosomal subunit protein uS13 (125 aa).

The segment at 95–125 is disordered; the sequence is GLPLRGQRTKTNARTRKGKRKTVANKKIASK.

It belongs to the universal ribosomal protein uS13 family. In terms of assembly, part of the 30S ribosomal subunit. Forms a loose heterodimer with protein S19. Forms two bridges to the 50S subunit in the 70S ribosome.

In terms of biological role, located at the top of the head of the 30S subunit, it contacts several helices of the 16S rRNA. In the 70S ribosome it contacts the 23S rRNA (bridge B1a) and protein L5 of the 50S subunit (bridge B1b), connecting the 2 subunits; these bridges are implicated in subunit movement. Contacts the tRNAs in the A and P-sites. The protein is Small ribosomal subunit protein uS13 of Borreliella burgdorferi (strain ATCC 35210 / DSM 4680 / CIP 102532 / B31) (Borrelia burgdorferi).